A 393-amino-acid polypeptide reads, in one-letter code: Bifunctional enzyme IspD/IspF (393 aa).

Positions 1-234 are 2-C-methyl-D-erythritol 4-phosphate cytidylyltransferase; the sequence is MTISQRTAAI…ARLAAQLGDI (234 aa). The tract at residues 235–393 is 2-C-methyl-D-erythritol 2,4-cyclodiphosphate synthase; that stretch reads RTGTGYDVHA…SATIRLPWSA (159 aa). Residues Asp241 and His243 each contribute to the a divalent metal cation site. 4-CDP-2-C-methyl-D-erythritol 2-phosphate-binding positions include 241–243 and 267–268; these read DVH and HS. His275 contacts a divalent metal cation. Residues 289-291, 365-368, Phe372, and Arg375 contribute to the 4-CDP-2-C-methyl-D-erythritol 2-phosphate site; these read DIG and TTSE.

It in the N-terminal section; belongs to the IspD/TarI cytidylyltransferase family. IspD subfamily. In the C-terminal section; belongs to the IspF family. A divalent metal cation serves as cofactor.

It catalyses the reaction 2-C-methyl-D-erythritol 4-phosphate + CTP + H(+) = 4-CDP-2-C-methyl-D-erythritol + diphosphate. The catalysed reaction is 4-CDP-2-C-methyl-D-erythritol 2-phosphate = 2-C-methyl-D-erythritol 2,4-cyclic diphosphate + CMP. Its pathway is isoprenoid biosynthesis; isopentenyl diphosphate biosynthesis via DXP pathway; isopentenyl diphosphate from 1-deoxy-D-xylulose 5-phosphate: step 2/6. The protein operates within isoprenoid biosynthesis; isopentenyl diphosphate biosynthesis via DXP pathway; isopentenyl diphosphate from 1-deoxy-D-xylulose 5-phosphate: step 4/6. Functionally, bifunctional enzyme that catalyzes the formation of 4-diphosphocytidyl-2-C-methyl-D-erythritol from CTP and 2-C-methyl-D-erythritol 4-phosphate (MEP) (IspD), and catalyzes the conversion of 4-diphosphocytidyl-2-C-methyl-D-erythritol 2-phosphate (CDP-ME2P) to 2-C-methyl-D-erythritol 2,4-cyclodiphosphate (ME-CPP) with a corresponding release of cytidine 5-monophosphate (CMP) (IspF). The protein is Bifunctional enzyme IspD/IspF of Bradyrhizobium sp. (strain BTAi1 / ATCC BAA-1182).